The sequence spans 264 residues: Undecaprenyl-diphosphatase (264 aa).

The next 8 membrane-spanning stretches (helical) occupy residues 1–21, 40–60, 81–101, 109–129, 140–160, 183–203, 211–231, and 239–259; these read MTVF…FLPI, GLTF…AFFW, MFWY…LLEE, TPLL…WADA, ISMA…IPGV, FSFL…LKDI, AFIT…SFLL, and FALF…LAAA.

This sequence belongs to the UppP family.

The protein localises to the cell membrane. It carries out the reaction di-trans,octa-cis-undecaprenyl diphosphate + H2O = di-trans,octa-cis-undecaprenyl phosphate + phosphate + H(+). Functionally, catalyzes the dephosphorylation of undecaprenyl diphosphate (UPP). Confers resistance to bacitracin. The chain is Undecaprenyl-diphosphatase from Pelotomaculum thermopropionicum (strain DSM 13744 / JCM 10971 / SI).